We begin with the raw amino-acid sequence, 333 residues long: Protein translocase subunit SecF (333 aa).

6 helical membrane passes run 27-47 (AIVM…NFGI), 152-172 (VWTA…YIWV), 180-200 (LGAV…FAVL), 207-227 (TTVA…VVVF), 253-275 (TLSR…LIWG), and 285-307 (AMVW…IVLF).

The protein belongs to the SecD/SecF family. SecF subfamily. Forms a complex with SecD. Part of the essential Sec protein translocation apparatus which comprises SecA, SecYEG and auxiliary proteins SecDF-YajC and YidC.

Its subcellular location is the cell inner membrane. In terms of biological role, part of the Sec protein translocase complex. Interacts with the SecYEG preprotein conducting channel. SecDF uses the proton motive force (PMF) to complete protein translocation after the ATP-dependent function of SecA. The sequence is that of Protein translocase subunit SecF from Rhodobacter capsulatus (strain ATCC BAA-309 / NBRC 16581 / SB1003).